The chain runs to 884 residues: Alanine--tRNA ligase (884 aa).

The Zn(2+) site is built by histidine 565, histidine 569, cysteine 675, and histidine 679.

The protein belongs to the class-II aminoacyl-tRNA synthetase family. Zn(2+) is required as a cofactor.

It localises to the cytoplasm. The enzyme catalyses tRNA(Ala) + L-alanine + ATP = L-alanyl-tRNA(Ala) + AMP + diphosphate. Its function is as follows. Catalyzes the attachment of alanine to tRNA(Ala) in a two-step reaction: alanine is first activated by ATP to form Ala-AMP and then transferred to the acceptor end of tRNA(Ala). Also edits incorrectly charged Ser-tRNA(Ala) and Gly-tRNA(Ala) via its editing domain. The protein is Alanine--tRNA ligase of Maricaulis maris (strain MCS10) (Caulobacter maris).